A 343-amino-acid polypeptide reads, in one-letter code: L-threonine 3-dehydrogenase (343 aa).

Cys-40 contributes to the Zn(2+) binding site. Catalysis depends on charge relay system residues Thr-42 and His-45. Residues His-65, Glu-66, Cys-95, Cys-98, Cys-101, and Cys-109 each contribute to the Zn(2+) site. NAD(+) is bound by residues Ile-177, Asp-197, Arg-202, Leu-264 to Ile-266, and Ile-288 to Tyr-289.

Belongs to the zinc-containing alcohol dehydrogenase family. Homotetramer. Zn(2+) serves as cofactor.

Its subcellular location is the cytoplasm. The catalysed reaction is L-threonine + NAD(+) = (2S)-2-amino-3-oxobutanoate + NADH + H(+). It functions in the pathway amino-acid degradation; L-threonine degradation via oxydo-reductase pathway; glycine from L-threonine: step 1/2. Functionally, catalyzes the NAD(+)-dependent oxidation of L-threonine to 2-amino-3-ketobutyrate. This is L-threonine 3-dehydrogenase from Vibrio parahaemolyticus serotype O3:K6 (strain RIMD 2210633).